The primary structure comprises 367 residues: C-X-C chemokine receptor type 3 (367 aa).

Residues 1–56 (MYLEVSERQVLDASDIAFLLENSTSPYDYGENESDFSDSPPCPQDFSLNFDRTFLP) lie on the Extracellular side of the membrane. Asn22 carries N-linked (GlcNAc...) asparagine glycosylation. Sulfotyrosine occurs at positions 27 and 29. The N-linked (GlcNAc...) asparagine glycan is linked to Asn32. A helical membrane pass occupies residues 57 to 77 (VLYSLLFLLGLLGNGAVAAVL). Residues 78–89 (LSQRTALSSTDT) lie on the Cytoplasmic side of the membrane. A helical membrane pass occupies residues 90 to 110 (FLLHLAVADVLLVLTLPLWAV). At 111–125 (DAAAQWVFGSGLCKV) the chain is on the extracellular side. An intrachain disulfide couples Cys123 to Cys202. The chain crosses the membrane as a helical span at residues 126 to 146 (AGALFNINFYAGAFLLACISF). Topologically, residues 147–168 (DRYLSIVHATQIYRRDPWVRVA) are cytoplasmic. A helical transmembrane segment spans residues 169 to 189 (LTCIVVWGLCVLFALPDFIFL). Topologically, residues 190-222 (SASHDQRLNATHCQYNFPQVGRTALRVLQLVAG) are extracellular. Asn198 carries N-linked (GlcNAc...) asparagine glycosylation. A helical membrane pass occupies residues 223–243 (FLMPLLVMAYCYAHILAVLLV). The Cytoplasmic portion of the chain corresponds to 244-255 (SRGQRRFRAMRL). A helical transmembrane segment spans residues 256 to 276 (VVVVVVAFAVCWTPYHLVVLV). Topologically, residues 277–300 (DILMDVGVLARNCGRESHVDVAKS) are extracellular. A helical transmembrane segment spans residues 301–321 (VTSGMGYMHCCLNPLLYAFVG). At 322–367 (VKFKEQMWMLLMRLGRSDQRGPQRQPSSSRRESSWSETTEASYLGL) the chain is on the cytoplasmic side. A disordered region spans residues 339–367 (DQRGPQRQPSSSRRESSWSETTEASYLGL).

It belongs to the G-protein coupled receptor 1 family. Homomer. Forms heteromers with ACKR4. Interacts with PF4/CXCL4. Post-translationally, sulfation on Tyr-27 and Tyr-29 is essential for CXCL10 binding. In terms of processing, N-glycosylated.

The protein resides in the cell membrane. Functionally, receptor for the C-X-C chemokine CXCL9, CXCL10 and CXCL11 and mediates the proliferation, survival and angiogenic activity of mesangial cells through a heterotrimeric G-protein signaling pathway. Probably promotes cell chemotaxis response. Binds to CCL21. Upon activation by PF4, induces activated T-lymphocytes migration mediated via downstream Ras/extracellular signal-regulated kinase (ERK) signaling. This is C-X-C chemokine receptor type 3 (Cxcr3) from Rattus norvegicus (Rat).